Consider the following 499-residue polypeptide: AP-1-like transcription factor CAP1 (499 aa).

Residues 1 to 64 (MTDIKRNFSD…RAYRERKERK (64 aa)) are disordered. 2 consecutive short sequence motifs (bipartite nuclear localization signal) follow at residues 20-27 (TKKLHVDS) and 44-51 (SKRTAQNR). Positions 40–103 (TEPKSKRTAQ…DVLKNELAKY (64 aa)) constitute a bZIP domain. Positions 43 to 66 (KSKRTAQNRAAQRAYRERKERKMK) are basic motif. A coiled-coil region spans residues 49–105 (QNRAAQRAYRERKERKMKELEDKVRLLEDANVRALTETDFLRAQVDVLKNELAKYTG). The leucine-zipper stretch occupies residues 68–75 (LEDKVRLL). The tract at residues 104–215 (TGGSDFSDLN…SSTPLNDNLL (112 aa)) is disordered. Polar residues predominate over residues 123 to 148 (HPNNHHSNVSTGTPHGSMSSSNSVAS). Low complexity-rich tracts occupy residues 155–164 (SSASSVSNNS) and 186–215 (QQQQQKVPQGVPDLVSGSSSSSTPLNDNLL). Residues 254 to 261 (CVKLNEAC) form a n-CRD region. Cystine bridges form between Cys254–Cys446 and Cys261–Cys477. Positions 408-442 (PEKQEKGKYEPPSTSKTTNNNEEEDKDEVVPAPPQ) are disordered. Residues 417–427 (EPPSTSKTTNN) show a composition bias toward low complexity. The c-CRD stretch occupies residues 446 to 477 (CSEIWDRITSHPKYTELDIDGLCNELKSKAKC). The Nuclear export signal signature appears at 462–469 (LDIDGLCN).

Belongs to the bZIP family. YAP subfamily. Interacts with YBP1. In terms of processing, upon oxidative stress, is oxidated by the peroxidase GPX3 and stabilized by YBP1. Oxidative stress induces conformational changes through oxidation of cysteine residues, masking the nuclear export signal, thus abolishing nuclear export by CRM1/exportin 1. Post-translationally, phosphorylated in response to H(2)O(2).

It is found in the nucleus. The protein resides in the cytoplasm. In terms of biological role, transcription activator involved in multidrug resistance, oxidative stress response, and redox homeostasis. Preferentially binds to promoters with the core binding site 5'-TTA[CG]TAA-3'. Involved in the oxidative stress response in via multiple pathways, including the cellular antioxidant defense system, carbohydrate metabolism and energy metabolism, protein degradation, ATP-dependent RNA helicase, and resistance pathways. The ability of the major systemic fungal pathogen of humans to sense and respond to reactive oxygen species, such as H(2)O(2) generated by the host immune system, is required for survival in the host and therefore virulence. Regulates the transcription of COR33, GLR1, GTO1, GTT1, GTT1, TRR1, TRX1, SOD1, CAT1, and the transcription regulator TSA1. Participates in the apoptosis by regulating the expression of the glutathione reductase gene and glutathione content. Also plays a role in the peroxide-mediated induction of MDR1 and other drug response genes such as PDR16, MDR1, FLU1, YCF1, and FCR1. Regulates trehalose accumulation which is important for the oxidative stress tolerance. Recruits ADA2 to its target promoters. Activity of CAP1 is controlled through oxidation of specific cysteine residues resulting in the alteration of its subcellular location. Oxidative stress induces nuclear accumulation and as a result CAP1 transcriptional activity. Nuclear export is restored when disulfide bonds are reduced by thioredoxin, whose expression is controlled by CAP1, providing a mechanism for negative autoregulation. The sequence is that of AP-1-like transcription factor CAP1 from Candida albicans (strain SC5314 / ATCC MYA-2876) (Yeast).